The sequence spans 432 residues: uncharacterized protein (432 aa).

Residue lysine 243 is modified to N6-(pyridoxal phosphate)lysine.

It belongs to the class-II pyridoxal-phosphate-dependent aminotransferase family. It depends on pyridoxal 5'-phosphate as a cofactor.

It is found in the cytoplasm. This is an uncharacterized protein from Methanocaldococcus jannaschii (strain ATCC 43067 / DSM 2661 / JAL-1 / JCM 10045 / NBRC 100440) (Methanococcus jannaschii).